Here is a 500-residue protein sequence, read N- to C-terminus: Maturase K (500 aa).

It belongs to the intron maturase 2 family. MatK subfamily.

It localises to the plastid. It is found in the chloroplast. Functionally, usually encoded in the trnK tRNA gene intron. Probably assists in splicing its own and other chloroplast group II introns. This is Maturase K from Prunus laurocerasus (Cherry laurel).